The sequence spans 337 residues: Putative [LysW]-lysine/[LysW]-ornithine hydrolase (337 aa).

Histidine 67 contributes to the Zn(2+) binding site. Aspartate 69 is an active-site residue. Position 91 (aspartate 91) interacts with Zn(2+). Glutamate 118 (proton acceptor) is an active-site residue. 3 residues coordinate Zn(2+): glutamate 119, glutamate 140, and histidine 298.

The protein belongs to the peptidase M20A family. LysK subfamily. The cofactor is Zn(2+). Co(2+) serves as cofactor.

The protein localises to the cytoplasm. It carries out the reaction [amino-group carrier protein]-C-terminal-gamma-(L-lysyl)-L-glutamate + H2O = [amino-group carrier protein]-C-terminal-L-glutamate + L-lysine. The catalysed reaction is [amino-group carrier protein]-C-terminal-gamma-(L-ornithyl)-L-glutamate + H2O = [amino-group carrier protein]-C-terminal-L-glutamate + L-ornithine. It participates in amino-acid biosynthesis; L-lysine biosynthesis via AAA pathway; L-lysine from L-alpha-aminoadipate (Thermus route): step 5/5. It functions in the pathway amino-acid biosynthesis; L-arginine biosynthesis. Functionally, catalyzes the release of L-lysine from [LysW]-gamma-L-lysine and the release of L-ornithine from [LysW]-L-ornithine. This chain is Putative [LysW]-lysine/[LysW]-ornithine hydrolase, found in Pyrococcus abyssi (strain GE5 / Orsay).